Here is a 618-residue protein sequence, read N- to C-terminus: uncharacterized protein (618 aa).

The segment at 1–45 (MSSKSASKLKREAKKAERLAAKGESVKPSKKNGTKNGKDKEVDGV) is disordered. 2 stretches are compositionally biased toward basic and acidic residues: residues 14-27 (KKAE…ESVK) and 36-45 (NGKDKEVDGV). Phosphoserine occurs at positions 50 and 53. Position 54 is a phosphothreonine (Thr54). 2 positions are modified to phosphoserine: Ser55 and Ser64. ABC transporter domains lie at 76–325 (IKID…LKQQ) and 388–609 (IAFN…QSRD). ATP contacts are provided by residues 108–115 (GDNGSGKS) and 423–430 (GKNGTGKS).

It belongs to the ABC transporter superfamily.

It localises to the cytoplasm. This is an uncharacterized protein from Schizosaccharomyces pombe (strain 972 / ATCC 24843) (Fission yeast).